The following is a 1274-amino-acid chain: Myosin-binding protein C, cardiac-type (1274 aa).

Met-1 carries the N-acetylmethionine modification. The 88-residue stretch at Pro-8–Thr-95 folds into the Ig-like C2-type 1 domain. Ser-47 is subject to Phosphoserine. The span at Thr-95 to Glu-104 shows a compositional bias: basic and acidic residues. The interval Thr-95 to Ala-153 is disordered. Thr-117 carries the post-translational modification Phosphothreonine. The span at Leu-128–Gly-149 shows a compositional bias: polar residues. In terms of domain architecture, Ig-like C2-type 2 spans Pro-157–Thr-259. Residues Gln-212, His-214, Glu-227, and His-229 each coordinate Zn(2+). Phosphoserine is present on Ser-279. A Phosphothreonine; by PKA and PKC modification is found at Thr-287. Ser-288 carries the post-translational modification Phosphoserine. Ser-307 bears the Phosphoserine; by PKA mark. 2 positions are modified to phosphoserine: Ser-312 and Ser-427. Ig-like C2-type domains are found at residues Lys-361–Pro-452 and Pro-452–Glu-546. A disulfide bridge links Cys-436 with Cys-443. Ser-459 and Ser-550 each carry phosphoserine. At Thr-607 the chain carries Phosphothreonine. Residues Pro-645–Thr-765 form the Ig-like C2-type 5 domain. 2 consecutive Fibronectin type-III domains span residues Ala-774–Pro-870 and Glu-872–Ile-967. Residues Pro-971–Val-1059 enclose the Ig-like C2-type 6 domain. The Fibronectin type-III 3 domain occupies Pro-1068–Pro-1163. Residues Pro-1181–Glu-1269 enclose the Ig-like C2-type 7 domain. Arg-1241 carries the post-translational modification Omega-N-methylarginine.

Belongs to the immunoglobulin superfamily. MyBP family. Substrate for phosphorylation by PKA and PKC. Reversible phosphorylation appears to modulate contraction. In terms of processing, polyubiquitinated.

Thick filament-associated protein located in the crossbridge region of vertebrate striated muscle a bands. In vitro it binds MHC, F-actin and native thin filaments, and modifies the activity of actin-activated myosin ATPase. It may modulate muscle contraction or may play a more structural role. The protein is Myosin-binding protein C, cardiac-type (Mybpc3) of Rattus norvegicus (Rat).